A 377-amino-acid chain; its full sequence is Geranylgeranyl transferase type-1 subunit beta (377 aa).

PFTB repeat units follow at residues 144–186 (KEAC…YMLN), 193–234 (MKKA…CLMG), 245–284 (LNRI…KLLK), and 291–333 (FEKN…SLME). Geranylgeranyl diphosphate contacts are provided by residues 219 to 221 (HGG) and 263 to 266 (RPNK). Positions 269 and 271 each coordinate Zn(2+). A geranylgeranyl diphosphate-binding site is contributed by 272 to 275 (YSFW). A Zn(2+)-binding site is contributed by H321.

It belongs to the protein prenyltransferase subunit beta family. As to quaternary structure, heterodimer of FNTA and PGGT1B. PGGT1B mediates interaction with substrate peptides. Zn(2+) is required as a cofactor. The cofactor is Mg(2+).

It catalyses the reaction geranylgeranyl diphosphate + L-cysteinyl-[protein] = S-geranylgeranyl-L-cysteinyl-[protein] + diphosphate. Its function is as follows. Catalyzes the transfer of a geranyl-geranyl moiety from geranyl-geranyl pyrophosphate to a cysteine at the fourth position from the C-terminus of proteins having the C-terminal sequence Cys-aliphatic-aliphatic-X. Known substrates include RAC1, RAC2, RAP1A and RAP1B. This Bos taurus (Bovine) protein is Geranylgeranyl transferase type-1 subunit beta (PGGT1B).